The sequence spans 621 residues: Chaperone protein HtpG (621 aa).

Residues 1-328 form an a; substrate-binding region; it reads MTQEKKKFDA…SEDLPLNISR (328 aa). The interval 329-544 is b; that stretch reads ESLQHNNVLE…DTAMDIRMER (216 aa). Positions 545-621 are c; sequence FLIEQKQIAN…LNDILQKAIL (77 aa).

The protein belongs to the heat shock protein 90 family. Homodimer.

It localises to the cytoplasm. Molecular chaperone. Has ATPase activity. The protein is Chaperone protein HtpG of Rickettsia prowazekii (strain Madrid E).